Here is a 362-residue protein sequence, read N- to C-terminus: UDP-N-acetylglucosamine--N-acetylmuramyl-(pentapeptide) pyrophosphoryl-undecaprenol N-acetylglucosamine transferase (362 aa).

Residues 15–17 (TGG), N127, R165, S191, I247, 266–271 (ALTVSE), and Q292 contribute to the UDP-N-acetyl-alpha-D-glucosamine site.

It belongs to the glycosyltransferase 28 family. MurG subfamily.

It is found in the cell inner membrane. It carries out the reaction di-trans,octa-cis-undecaprenyl diphospho-N-acetyl-alpha-D-muramoyl-L-alanyl-D-glutamyl-meso-2,6-diaminopimeloyl-D-alanyl-D-alanine + UDP-N-acetyl-alpha-D-glucosamine = di-trans,octa-cis-undecaprenyl diphospho-[N-acetyl-alpha-D-glucosaminyl-(1-&gt;4)]-N-acetyl-alpha-D-muramoyl-L-alanyl-D-glutamyl-meso-2,6-diaminopimeloyl-D-alanyl-D-alanine + UDP + H(+). It functions in the pathway cell wall biogenesis; peptidoglycan biosynthesis. Its function is as follows. Cell wall formation. Catalyzes the transfer of a GlcNAc subunit on undecaprenyl-pyrophosphoryl-MurNAc-pentapeptide (lipid intermediate I) to form undecaprenyl-pyrophosphoryl-MurNAc-(pentapeptide)GlcNAc (lipid intermediate II). The polypeptide is UDP-N-acetylglucosamine--N-acetylmuramyl-(pentapeptide) pyrophosphoryl-undecaprenol N-acetylglucosamine transferase (Shewanella baltica (strain OS185)).